Consider the following 145-residue polypeptide: Antiholin-like protein LrgA (145 aa).

A run of 4 helical transmembrane segments spans residues 10–30 (PAHF…SKII), 33–53 (FMPI…VLLC), 72–92 (NIGL…GVIS), and 96–116 (FLII…TGYV).

This sequence belongs to the CidA/LrgA family. LrgA subfamily.

The protein localises to the cell membrane. Functionally, inhibits the expression or activity of extracellular murein hydrolases by interacting, possibly with LrgB, with the holin-like proteins CidA and/or CidB. The LrgAB and CidAB proteins may affect the proton motive force of the membrane. May be involved in programmed cell death (PCD), possibly triggering PCD in response to antibiotics and environmental stresses. The protein is Antiholin-like protein LrgA of Staphylococcus aureus (strain Mu3 / ATCC 700698).